Here is a 98-residue protein sequence, read N- to C-terminus: NADH-ubiquinone oxidoreductase chain 4L (98 aa).

A run of 3 helical transmembrane segments spans residues 1-21 (MSLTYMNMLMAFTTSLLGLLM), 29-49 (SLLCLEGMMLSLFVMVTITIL), and 61-81 (IILLVFAACEAALGLSLLVMV).

This sequence belongs to the complex I subunit 4L family. As to quaternary structure, core subunit of respiratory chain NADH dehydrogenase (Complex I) which is composed of 45 different subunits.

The protein resides in the mitochondrion inner membrane. It carries out the reaction a ubiquinone + NADH + 5 H(+)(in) = a ubiquinol + NAD(+) + 4 H(+)(out). In terms of biological role, core subunit of the mitochondrial membrane respiratory chain NADH dehydrogenase (Complex I) which catalyzes electron transfer from NADH through the respiratory chain, using ubiquinone as an electron acceptor. Part of the enzyme membrane arm which is embedded in the lipid bilayer and involved in proton translocation. The chain is NADH-ubiquinone oxidoreductase chain 4L (MT-ND4L) from Ectophylla alba (White bat).